The sequence spans 202 residues: LexA repressor (202 aa).

A DNA-binding region (H-T-H motif) is located at residues 28–48; the sequence is RAEIAQRLGFRSPNAAEEHLK. Active-site for autocatalytic cleavage activity residues include S119 and K156.

This sequence belongs to the peptidase S24 family. In terms of assembly, homodimer.

It catalyses the reaction Hydrolysis of Ala-|-Gly bond in repressor LexA.. Its function is as follows. Represses a number of genes involved in the response to DNA damage (SOS response), including recA and lexA. Binds to the 16 bp palindromic sequence 5'-CTGTATATATATACAG-3'. In the presence of single-stranded DNA, RecA interacts with LexA causing an autocatalytic cleavage which disrupts the DNA-binding part of LexA, leading to derepression of the SOS regulon and eventually DNA repair. This is LexA repressor from Salmonella agona (strain SL483).